The sequence spans 70 residues: UPF0270 protein VIBHAR_00073 (70 aa).

Belongs to the UPF0270 family.

The protein is UPF0270 protein VIBHAR_00073 of Vibrio campbellii (strain ATCC BAA-1116).